Consider the following 798-residue polypeptide: Palmitoyl thioesterase CPT1C (798 aa).

Residues 1 to 52 are Cytoplasmic-facing; sequence MAEAHQASSLLSSLSSDGAEVELSSPVWQEIYLCALRSWKRHLWRVWNDFLA. Residues 53 to 75 traverse the membrane as a helical segment; that stretch reads GVVPATPLSWLFLFSTIQLACLL. The Lumenal segment spans residues 76 to 103; it reads QLDPSLGLMEKIKELLPDWGGQHHQLQG. Residues 104 to 126 traverse the membrane as a helical segment; that stretch reads FLSAAVFASCLWGALIFTLHVAL. Topologically, residues 127–798 are cytoplasmic; sequence RLLLSHHGWL…PNTPTSSTNL (672 aa). The Proton acceptor role is filled by histidine 469. Residue 551–563 coordinates CoA; the sequence is GKSFIKCCHVSSD. (R)-carnitine contacts are provided by tyrosine 585, serine 587, and threonine 598. Positions 759-798 are required for interaction with GRIA1; the sequence is LFRVGQHFKRQFRGENSDYRYNFLSCKTVDPNTPTSSTNL.

It belongs to the carnitine/choline acetyltransferase family. As to quaternary structure, peripherally associated with AMPAR complex. AMPAR complex consists of an inner core made of 4 pore-forming GluA/GRIA proteins (GRIA1, GRIA2, GRIA3 and GRIA4) and 4 major auxiliary subunits arranged in a twofold symmetry. One of the two pairs of distinct binding sites is occupied either by CNIH2, CNIH3 or CACNG2, CACNG3. The other harbors CACNG2, CACNG3, CACNG4, CACNG8 or GSG1L. This inner core of AMPAR complex is complemented by outer core constituents binding directly to the GluA/GRIA proteins at sites distinct from the interaction sites of the inner core constituents. Outer core constituents include at least PRRT1, PRRT2, CKAMP44/SHISA9, FRRS1L and NRN1. The proteins of the inner and outer core serve as a platform for other, more peripherally associated AMPAR constituents, including CPT1C. Alone or in combination, these auxiliary subunits control the gating and pharmacology of the AMPAR complex and profoundly impact their biogenesis and protein processing. Interacts with SACM1L; the interaction regulates SACM1L phosphatidylinositol-3-phosphatase activity and translocation to endoplasmic reticulum/trans Golgi network in a malonyl-CoA dependent manner. Interacts with ATL1. As to expression, predominantly expressed in brain (at protein level) and testis, highly expressed in the hippocampus, amygdala and cerebellum. Expressed in neurons but not astrocytes. Expressed in the ventral horn from spinal cords.

The protein localises to the synapse. It is found in the cell projection. The protein resides in the axon. Its subcellular location is the dendrite. It localises to the dendritic spine. The protein localises to the endoplasmic reticulum membrane. It carries out the reaction S-hexadecanoyl-L-cysteinyl-[protein] + H2O = L-cysteinyl-[protein] + hexadecanoate + H(+). Its function is as follows. Palmitoyl thioesterase specifically expressed in the endoplasmic reticulum of neurons. Modulates the trafficking of the glutamate receptor, AMPAR, to plasma membrane through depalmitoylation of GRIA1. Also regulates AMPR trafficking through the regulation of SACM1L phosphatidylinositol-3-phosphatase activity by interaction in a malonyl-CoA dependent manner. Binds malonyl-CoA and couples malonyl-CoA to ceramide levels, necessary for proper spine maturation and contributing to systemic energy homeostasis and appetite control. Binds to palmitoyl-CoA, but does not have carnitine palmitoyltransferase 1 catalytic activity or at very low levels. The polypeptide is Palmitoyl thioesterase CPT1C (Cpt1c) (Mus musculus (Mouse)).